We begin with the raw amino-acid sequence, 244 residues long: High affinity immunoglobulin epsilon receptor subunit beta (244 aa).

The Cytoplasmic portion of the chain corresponds to 1 to 59; that stretch reads MDTESNRRANLALPQEPSSVPAFEVLEISPQEVSSGRLLKSASSPPLHTWLTVLKKEQE. A helical transmembrane segment spans residues 60–79; sequence FLGVTQILTAMICLCFGTVV. Topologically, residues 80–97 are extracellular; the sequence is CSVLDISHIEGDIFSSFK. Residues 98-117 traverse the membrane as a helical segment; it reads AGYPFWGAIFFSISGMLSII. Residues 118–130 are Cytoplasmic-facing; the sequence is SERRNATYLVRGS. The helical transmembrane segment at 131–150 threads the bilayer; it reads LGANTASSIAGGTGITILII. Topologically, residues 151–180 are extracellular; that stretch reads NLKKSLAYIHIHSCQKFFETKCFMASFSTE. The helical transmembrane segment at 181 to 200 threads the bilayer; the sequence is IVVMMLFLTILGLGSAVSLT. Residues 201 to 244 lie on the Cytoplasmic side of the membrane; the sequence is ICGAGEELKGNKVPEDRVYEELNIYSATYSELEDPGEMSPPIDL. A phosphotyrosine mark is found at Y219 and Y225. S226 is modified (phosphoserine). Y229 carries the phosphotyrosine modification.

This sequence belongs to the MS4A family. Tetramer of an alpha chain, a beta chain, and two disulfide linked gamma chains. Binds LILRB1. Interacts with FGR, FES/FPS and LYN. Phosphorylated on tyrosine residues by LYN. In terms of tissue distribution, found on the surface of mast cells and basophils.

Its subcellular location is the membrane. High affinity receptor that binds to the Fc region of immunoglobulins epsilon. Aggregation of FCER1 by multivalent antigens is required for the full mast cell response, including the release of preformed mediators (such as histamine) by degranulation and de novo production of lipid mediators and cytokines. Also mediates the secretion of important lymphokines. Binding of allergen to receptor-bound IgE leads to cell activation and the release of mediators responsible for the manifestations of allergy. This chain is High affinity immunoglobulin epsilon receptor subunit beta (MS4A2), found in Homo sapiens (Human).